The sequence spans 128 residues: Large ribosomal subunit protein bL17 (128 aa).

The protein belongs to the bacterial ribosomal protein bL17 family. Part of the 50S ribosomal subunit. Contacts protein L32.

The polypeptide is Large ribosomal subunit protein bL17 (Tolumonas auensis (strain DSM 9187 / NBRC 110442 / TA 4)).